Reading from the N-terminus, the 436-residue chain is Chorismate synthase, chloroplastic (436 aa).

A disordered region spans residues 1–24 (MASSSLTSKSILGSTKLGSSSLPS). A chloroplast-targeting transit peptide spans 1–50 (MASSSLTSKSILGSTKLGSSSLPSELRRLSSPAVQISLRTQTRKNFQIQA).

It belongs to the chorismate synthase family. As to quaternary structure, homotetramer. FMNH2 is required as a cofactor.

It localises to the plastid. The protein resides in the chloroplast. The enzyme catalyses 5-O-(1-carboxyvinyl)-3-phosphoshikimate = chorismate + phosphate. Its pathway is metabolic intermediate biosynthesis; chorismate biosynthesis; chorismate from D-erythrose 4-phosphate and phosphoenolpyruvate: step 7/7. Catalyzes the last common step of the biosynthesis of aromatic amino acids, produced via the shikimic acid pathway. This chain is Chorismate synthase, chloroplastic (EMB1144), found in Arabidopsis thaliana (Mouse-ear cress).